The primary structure comprises 283 residues: Putative transcription factor kapC (283 aa).

A compositionally biased stretch (pro residues) spans 1-10 (MQPTLAPAPH). The disordered stretch occupies residues 1–121 (MQPTLAPAPH…NRAAQRAFRQ (121 aa)). Positions 26–42 (HDQLLAAHQHLSHPQQA) are enriched in low complexity. Polar residues predominate over residues 55-67 (QPNTTSPRDQNNI). In terms of domain architecture, bZIP spans 102 to 165 (PLSTSKRAAQ…EYIINLQSRL (64 aa)). Positions 103-126 (LSTSKRAAQNRAAQRAFRQRKESY) are basic motif. Positions 108–118 (RAAQNRAAQRA) are enriched in low complexity. Positions 130–161 (LEEQVKEFDNTNETMKQLQAENYQLREYIINL) are leucine-zipper. Residues 178 to 283 (NIDLNQPRND…EPGHGLPVVS (106 aa)) are disordered.

It belongs to the bZIP family.

The protein localises to the nucleus. Putative transcription factor. This Aspergillus niger (strain ATCC MYA-4892 / CBS 513.88 / FGSC A1513) protein is Putative transcription factor kapC (kapC).